The sequence spans 509 residues: Bifunctional purine biosynthesis protein PurH (509 aa).

In terms of domain architecture, MGS-like spans 1-144 (MKRALISVSD…KNYAAVTVVV (144 aa)).

This sequence belongs to the PurH family.

The enzyme catalyses (6R)-10-formyltetrahydrofolate + 5-amino-1-(5-phospho-beta-D-ribosyl)imidazole-4-carboxamide = 5-formamido-1-(5-phospho-D-ribosyl)imidazole-4-carboxamide + (6S)-5,6,7,8-tetrahydrofolate. It catalyses the reaction IMP + H2O = 5-formamido-1-(5-phospho-D-ribosyl)imidazole-4-carboxamide. The protein operates within purine metabolism; IMP biosynthesis via de novo pathway; 5-formamido-1-(5-phospho-D-ribosyl)imidazole-4-carboxamide from 5-amino-1-(5-phospho-D-ribosyl)imidazole-4-carboxamide (10-formyl THF route): step 1/1. Its pathway is purine metabolism; IMP biosynthesis via de novo pathway; IMP from 5-formamido-1-(5-phospho-D-ribosyl)imidazole-4-carboxamide: step 1/1. This is Bifunctional purine biosynthesis protein PurH from Listeria monocytogenes serotype 4a (strain HCC23).